Consider the following 255-residue polypeptide: Polycomb group RING finger protein 5 (255 aa).

Residues 18–57 (CYICKGYLIKPTTVTECLHTFCKTCIVQHFEDSNDCPRCG) form an RING-type zinc finger. Residues 97 to 132 (WKKNKPQENGQDDMSKVDKPKVDEEGDENQDDKDYH) are disordered. The segment covering 109-119 (DMSKVDKPKVD) has biased composition (basic and acidic residues).

In terms of assembly, component of a PRC1-like complex that contains PCGF5, RNF2 and UBE2D3. Interacts with RNF2; the interaction is direct. Interacts with CBX6, CBX7 and CBX8. Interacts with AUTS2; the interaction is direct. Identified in a complex that contains AUTS2, PCGF5, CSNK2B and RNF2.

Its subcellular location is the nucleus. It is found in the nucleoplasm. Functionally, component of a Polycomb group (PcG) multiprotein PRC1-like complex, a complex class required to maintain the transcriptionally repressive state of many genes, including Hox genes, throughout development. PcG PRC1 complex acts via chromatin remodeling and modification of histones; it mediates monoubiquitination of histone H2A 'Lys-119', rendering chromatin heritably changed in its expressibility. Within the PRC1-like complex, regulates RNF2 ubiquitin ligase activity. Plays a redundant role with PCGF3 as part of a PRC1-like complex that mediates monoubiquitination of histone H2A 'Lys-119' on the X chromosome and is required for normal silencing of one copy of the X chromosome in XX females. The sequence is that of Polycomb group RING finger protein 5 (PCGF5) from Bos taurus (Bovine).